We begin with the raw amino-acid sequence, 165 residues long: Sec-independent protein translocase protein TatB (165 aa).

The helical transmembrane segment at 1–21 (MFDVSFTELIVIGVVALIVLG) threads the bilayer. Polar residues predominate over residues 67 to 84 (DSTAQDVNQSLRSATDSL). The segment at 67–165 (DSTAQDVNQS…PKSPSTGNAT (99 aa)) is disordered. The span at 127-159 (KLPGTPATLPATAAAEPTPAAPAASQAEAPKSP) shows a compositional bias: low complexity.

It belongs to the TatB family. In terms of assembly, the Tat system comprises two distinct complexes: a TatABC complex, containing multiple copies of TatA, TatB and TatC subunits, and a separate TatA complex, containing only TatA subunits. Substrates initially bind to the TatABC complex, which probably triggers association of the separate TatA complex to form the active translocon.

The protein localises to the cell inner membrane. In terms of biological role, part of the twin-arginine translocation (Tat) system that transports large folded proteins containing a characteristic twin-arginine motif in their signal peptide across membranes. Together with TatC, TatB is part of a receptor directly interacting with Tat signal peptides. TatB may form an oligomeric binding site that transiently accommodates folded Tat precursor proteins before their translocation. In Bordetella avium (strain 197N), this protein is Sec-independent protein translocase protein TatB.